The following is a 330-amino-acid chain: Protein rlx (330 aa).

Residues 220–330 (LGEDYDKGGL…EKTRGFDLEL (111 aa)) form a disordered region. Composition is skewed to basic and acidic residues over residues 237-269 (NEQR…EWAR) and 279-330 (QNRE…DLEL).

Functionally, this protein is probably required for relaxation complex formation and plasmid mobilization by conjugative plasmids. The chain is Protein rlx (rlx) from Staphylococcus aureus.